The sequence spans 664 residues: Acetolactate synthase 2, chloroplastic (664 aa).

The span at 1-34 (MAAAAAAPSPSFSKTLSSSSSKSSTLLPRSTFPF) shows a compositional bias: low complexity. The disordered stretch occupies residues 1–51 (MAAAAAAPSPSFSKTLSSSSSKSSTLLPRSTFPFPHHPHKTTPPPLHLTPT). The N-terminal 91 residues, 1–91 (MAAAAAAPSP…VSRFAPDEPR (91 aa)), are a transit peptide targeting the chloroplast. Position 138 (glutamate 138) interacts with thiamine diphosphate. Cysteine 158 and cysteine 304 form a disulfide bridge. FAD contacts are provided by residues arginine 240, 346-367 (HGTV…FGVR), and 389-408 (DIDS…ICAD). The interval 481–561 (QHQMWAAQYY…VKIMLLNNQH (81 aa)) is thiamine pyrophosphate binding. Mg(2+) contacts are provided by aspartate 532 and asparagine 559.

It belongs to the TPP enzyme family. The cofactor is Mg(2+). Requires thiamine diphosphate as cofactor.

The protein localises to the plastid. It is found in the chloroplast. The enzyme catalyses 2 pyruvate + H(+) = (2S)-2-acetolactate + CO2. It functions in the pathway amino-acid biosynthesis; L-isoleucine biosynthesis; L-isoleucine from 2-oxobutanoate: step 1/4. It participates in amino-acid biosynthesis; L-valine biosynthesis; L-valine from pyruvate: step 1/4. This Nicotiana tabacum (Common tobacco) protein is Acetolactate synthase 2, chloroplastic (ALS SURB).